We begin with the raw amino-acid sequence, 390 residues long: Calcium-binding and spermatid-specific protein 1 (390 aa).

3 disordered regions span residues M1–E23, A82–I109, and T146–D225. Residues E162 to T174 show a composition bias toward acidic residues. Low complexity predominate over residues T184 to D193. Residues S251 and S267 each carry the phosphoserine modification. At T280 the chain carries Phosphothreonine; by CK2. A Phosphoserine modification is found at S312. Over residues E330 to A344 the composition is skewed to basic and acidic residues. Residues E330–M390 form a disordered region. S346, S356, S371, and S375 each carry phosphoserine. Over residues S346–S364 the composition is skewed to polar residues.

As to expression, expressed in seminiferous tubules of the testis in step 10 spermatids (stage X), subsequently increasing to reach maximal levels of step 18 elongated spermatids (stage VI) (at protein level). Strongly expressed in testis. Weakly expressed in olfactory epithelium. Expressed in spermatids of seminiferous tubules at steps 4-14 (stages IV to XIV of the seminiferous epithelium classification).

Its subcellular location is the cytoplasm. It localises to the mitochondrion inner membrane. The protein localises to the cell projection. The protein resides in the cilium. It is found in the flagellum. Its subcellular location is the cytoplasmic vesicle. It localises to the secretory vesicle. The protein localises to the acrosome. In terms of biological role, calcium-binding protein. Essential for maintaining the structural integrity of the sperm flagella. The polypeptide is Calcium-binding and spermatid-specific protein 1 (Cabs1) (Rattus norvegicus (Rat)).